We begin with the raw amino-acid sequence, 493 residues long: Glutamate--tRNA ligase (493 aa).

The 'HIGH' region motif lies at 10 to 20 (PSPTGDPHVGT). The 'KMSKS' region signature appears at 251-255 (KLSKR). K254 contacts ATP.

Belongs to the class-I aminoacyl-tRNA synthetase family. Glutamate--tRNA ligase type 1 subfamily. Monomer.

It is found in the cytoplasm. It catalyses the reaction tRNA(Glu) + L-glutamate + ATP = L-glutamyl-tRNA(Glu) + AMP + diphosphate. In terms of biological role, catalyzes the attachment of glutamate to tRNA(Glu) in a two-step reaction: glutamate is first activated by ATP to form Glu-AMP and then transferred to the acceptor end of tRNA(Glu). This chain is Glutamate--tRNA ligase, found in Pseudomonas putida (strain W619).